The following is a 350-amino-acid chain: Phosphotriesterase-related protein (350 aa).

Residues H22, H24, E169, H201, H230, and D298 each coordinate a divalent metal cation.

Belongs to the metallo-dependent hydrolases superfamily. Phosphotriesterase family. The cofactor is a divalent metal cation.

This Drosophila grimshawi (Hawaiian fruit fly) protein is Phosphotriesterase-related protein.